We begin with the raw amino-acid sequence, 150 residues long: MPIWVDADACPVPIREILCRAATRWQIQTTFIANHAISLPPSPHISRRQVPHGFDVADNEIMDQMSKGDLVITQDIPLAAEAIEKGADVFNPRGQAFTKENIRQRLAMRNFMEEMRNAGQVTGGPAPFSQGDRKEFADQLDRWLQRNARK.

This sequence belongs to the UPF0178 family.

This Marinobacter nauticus (strain ATCC 700491 / DSM 11845 / VT8) (Marinobacter aquaeolei) protein is UPF0178 protein Maqu_2186.